Reading from the N-terminus, the 175-residue chain is Sec-independent protein translocase protein TatB (175 aa).

A helical membrane pass occupies residues Met-1–Gly-21. Disordered stretches follow at residues Gly-104–Trp-132 and Ser-155–Phe-175.

This sequence belongs to the TatB family. In terms of assembly, the Tat system comprises two distinct complexes: a TatABC complex, containing multiple copies of TatA, TatB and TatC subunits, and a separate TatA complex, containing only TatA subunits. Substrates initially bind to the TatABC complex, which probably triggers association of the separate TatA complex to form the active translocon.

It is found in the cell inner membrane. Part of the twin-arginine translocation (Tat) system that transports large folded proteins containing a characteristic twin-arginine motif in their signal peptide across membranes. Together with TatC, TatB is part of a receptor directly interacting with Tat signal peptides. TatB may form an oligomeric binding site that transiently accommodates folded Tat precursor proteins before their translocation. The chain is Sec-independent protein translocase protein TatB from Paraburkholderia xenovorans (strain LB400).